The primary structure comprises 975 residues: Nesprin-3 (975 aa).

The Cytoplasmic segment spans residues 1–925 (MTQQPQEDFE…PCSLLQKACR (925 aa)). 2 Spectrin repeats span residues 220-325 (QDHE…RLRG) and 647-740 (REHC…QALR). A disordered region spans residues 778–798 (LINPQDPIPRRQHGANPLEGH). Residues 917–975 (CSLLQKACRVALPLQLLLLLFLLLLFLLPAGEEERSCALANNFARSFALMLRYNGPPPT) enclose the KASH domain. A helical; Anchor for type IV membrane protein transmembrane segment spans residues 926 to 946 (VALPLQLLLLLFLLLLFLLPA). Residues 947-975 (GEEERSCALANNFARSFALMLRYNGPPPT) lie on the Perinuclear space side of the membrane.

Belongs to the nesprin family. Core component of LINC complexes which are composed of inner nuclear membrane SUN domain-containing proteins coupled to outer nuclear membrane KASH domain-containing nesprins. SUN and KASH domain-containing proteins seem to bind each other promiscuously; however, differentially expression of LINC complex constituents can give rise to specific assemblies. Interacts with SUN1 and SUN2; probably forming respective LINC complexes. Interacts with PLEC (via actin-binding domain). Interacts with DST. Interacts with SYNE1. Interacts (via KASH domain) with TOR1A (ATP-bound); the interaction is required for SYNE3 nuclear envelope localization. The disulfid bond with SUN1 or SUN2 is required for stability of the respective LINC complex under tensile forces. As to expression, ubiquitous.

It localises to the nucleus outer membrane. The protein localises to the nucleus envelope. It is found in the rough endoplasmic reticulum. Functionally, as a component of the LINC (LInker of Nucleoskeleton and Cytoskeleton) complex involved in the connection between the nuclear lamina and the cytoskeleton. The nucleocytoplasmic interactions established by the LINC complex play an important role in the transmission of mechanical forces across the nuclear envelope and in nuclear movement and positioning. Probable anchoring protein which tethers the nucleus to the cytoskeleton by binding PLEC which can associate with the intermediate filament system. Plays a role in the regulation of aortic epithelial cell morphology, and is required for flow-induced centrosome polarization and directional migration in aortic endothelial cells. The sequence is that of Nesprin-3 (Syne3) from Mus musculus (Mouse).